Consider the following 209-residue polypeptide: Floral homeotic protein GLOBOSA (209 aa).

The region spanning 3 to 57 (RGKIEIKRIENSSNRQVTYSKRRNGILKKAKEISVLCDARVSVIIFASSGKMHEF) is the MADS-box domain. In terms of domain architecture, K-box spans 82 to 173 (HENLDNEINK…QLEIASMNRN (92 aa)).

Expressed mainly in floral organs and, within the flower, expression is restricted to petals and stamens.

The protein resides in the nucleus. In terms of biological role, transcription factor involved in the genetic control of flower development. Acts in conjunction with DEFICIENS (defA). This chain is Floral homeotic protein GLOBOSA (GLO), found in Nicotiana tabacum (Common tobacco).